Consider the following 413-residue polypeptide: Multifunctional CCA protein (413 aa).

Residues glycine 8 and arginine 11 each coordinate ATP. Positions 8 and 11 each coordinate CTP. Positions 21 and 23 each coordinate Mg(2+). Positions 91, 143, and 146 each coordinate ATP. CTP contacts are provided by arginine 91, arginine 143, and arginine 146. One can recognise an HD domain in the interval 232-333 (TGVHVMMVVD…VRLFERSDAL (102 aa)).

It belongs to the tRNA nucleotidyltransferase/poly(A) polymerase family. Bacterial CCA-adding enzyme type 1 subfamily. Monomer. Can also form homodimers and oligomers. Mg(2+) is required as a cofactor. It depends on Ni(2+) as a cofactor.

The enzyme catalyses a tRNA precursor + 2 CTP + ATP = a tRNA with a 3' CCA end + 3 diphosphate. It carries out the reaction a tRNA with a 3' CCA end + 2 CTP + ATP = a tRNA with a 3' CCACCA end + 3 diphosphate. Catalyzes the addition and repair of the essential 3'-terminal CCA sequence in tRNAs without using a nucleic acid template. Adds these three nucleotides in the order of C, C, and A to the tRNA nucleotide-73, using CTP and ATP as substrates and producing inorganic pyrophosphate. tRNA 3'-terminal CCA addition is required both for tRNA processing and repair. Also involved in tRNA surveillance by mediating tandem CCA addition to generate a CCACCA at the 3' terminus of unstable tRNAs. While stable tRNAs receive only 3'-terminal CCA, unstable tRNAs are marked with CCACCA and rapidly degraded. This Burkholderia orbicola (strain MC0-3) protein is Multifunctional CCA protein.